A 336-amino-acid chain; its full sequence is Ketol-acid reductoisomerase (NADP(+)) (336 aa).

Residues 2–182 (AKIYYQQDCN…GGARAGVLET (181 aa)) form the KARI N-terminal Rossmann domain. NADP(+) contacts are provided by residues 25 to 28 (YGSQ), Ser-51, Ser-53, and 83 to 86 (DEKQ). His-108 is a catalytic residue. An NADP(+)-binding site is contributed by Gly-134. A KARI C-terminal knotted domain is found at 183 to 328 (TFREETETDL…AELRGLMSWT (146 aa)). Mg(2+)-binding residues include Asp-191, Glu-195, Glu-227, and Glu-231. Ser-252 provides a ligand contact to substrate.

It belongs to the ketol-acid reductoisomerase family. The cofactor is Mg(2+).

It catalyses the reaction (2R)-2,3-dihydroxy-3-methylbutanoate + NADP(+) = (2S)-2-acetolactate + NADPH + H(+). It carries out the reaction (2R,3R)-2,3-dihydroxy-3-methylpentanoate + NADP(+) = (S)-2-ethyl-2-hydroxy-3-oxobutanoate + NADPH + H(+). Its pathway is amino-acid biosynthesis; L-isoleucine biosynthesis; L-isoleucine from 2-oxobutanoate: step 2/4. It participates in amino-acid biosynthesis; L-valine biosynthesis; L-valine from pyruvate: step 2/4. Involved in the biosynthesis of branched-chain amino acids (BCAA). Catalyzes an alkyl-migration followed by a ketol-acid reduction of (S)-2-acetolactate (S2AL) to yield (R)-2,3-dihydroxy-isovalerate. In the isomerase reaction, S2AL is rearranged via a Mg-dependent methyl migration to produce 3-hydroxy-3-methyl-2-ketobutyrate (HMKB). In the reductase reaction, this 2-ketoacid undergoes a metal-dependent reduction by NADPH to yield (R)-2,3-dihydroxy-isovalerate. The sequence is that of Ketol-acid reductoisomerase (NADP(+)) from Lachnoclostridium phytofermentans (strain ATCC 700394 / DSM 18823 / ISDg) (Clostridium phytofermentans).